A 336-amino-acid polypeptide reads, in one-letter code: Anthranilate phosphoribosyltransferase (336 aa).

Residues G82, 85–86, T90, 92–95, 110–118, and S122 each bind 5-phospho-alpha-D-ribose 1-diphosphate; these read GD, NIST, and KHGNRSVSS. Residue G82 participates in anthranilate binding. Residue S94 participates in Mg(2+) binding. An anthranilate-binding site is contributed by N113. Residue R168 coordinates anthranilate. Mg(2+) contacts are provided by D227 and E228.

Belongs to the anthranilate phosphoribosyltransferase family. Homodimer. Mg(2+) serves as cofactor.

The catalysed reaction is N-(5-phospho-beta-D-ribosyl)anthranilate + diphosphate = 5-phospho-alpha-D-ribose 1-diphosphate + anthranilate. It functions in the pathway amino-acid biosynthesis; L-tryptophan biosynthesis; L-tryptophan from chorismate: step 2/5. Catalyzes the transfer of the phosphoribosyl group of 5-phosphorylribose-1-pyrophosphate (PRPP) to anthranilate to yield N-(5'-phosphoribosyl)-anthranilate (PRA). The polypeptide is Anthranilate phosphoribosyltransferase (Leptospira interrogans serogroup Icterohaemorrhagiae serovar copenhageni (strain Fiocruz L1-130)).